Here is a 102-residue protein sequence, read N- to C-terminus: Cytochrome b (102 aa).

Transmembrane regions (helical) follow at residues F1 to M21, W45 to I66, and W81 to F101. 2 residues coordinate heme b: H51 and H65.

It belongs to the cytochrome b family. In terms of assembly, the cytochrome bc1 complex contains 3 respiratory subunits (MT-CYB, CYC1 and UQCRFS1), 2 core proteins (UQCRC1 and UQCRC2) and probably 6 low-molecular weight proteins. Heme b is required as a cofactor.

The protein localises to the mitochondrion inner membrane. Its function is as follows. Component of the ubiquinol-cytochrome c reductase complex (complex III or cytochrome b-c1 complex) that is part of the mitochondrial respiratory chain. The b-c1 complex mediates electron transfer from ubiquinol to cytochrome c. Contributes to the generation of a proton gradient across the mitochondrial membrane that is then used for ATP synthesis. This chain is Cytochrome b (mt-cyb), found in Plethodon yonahlossee (Yonahlossee salamander).